We begin with the raw amino-acid sequence, 459 residues long: LAS seventeen-binding protein 3 (459 aa).

The interval 219-403 is disordered; it reads RPSNGGRGSF…APTSPSTSSP (185 aa). Serine 227 bears the Phosphoserine mark. Acidic residues predominate over residues 229 to 242; the sequence is DDDEDDYYDDDDYY. Low complexity predominate over residues 243–262; sequence NDIPSSFSSTDASSTRPNTR. Residues 289–300 show a composition bias toward polar residues; it reads YSRNSRLAPTNS. Position 298 is a phosphothreonine (threonine 298). 2 positions are modified to phosphoserine: serine 300 and serine 303. The segment covering 340–350 has biased composition (acidic residues); sequence DEYDDYDDDYE. A compositionally biased stretch (basic and acidic residues) spans 351–371; that stretch reads SGYRRGNGRDRTKDREVDDLS. A compositionally biased stretch (polar residues) spans 372–391; the sequence is NRFSKSRISSASTPQTSQGR. Threonine 393 bears the Phosphothreonine mark. Residues 393–403 show a composition bias toward low complexity; it reads TAPTSPSTSSP. Residues serine 397, serine 402, and serine 416 each carry the phosphoserine modification. The SH3 domain occupies 400–459; the sequence is TSSPKAVALYSFAGEESGDLPFRKGDVITILKKSDSQNDWWTGRVNGREGIFPANYVELV.

It belongs to the SH3YL1 family. As to quaternary structure, interacts with LAS17. Phosphorylation of Ser-397 is induced 2-fold in response to mating pheromone.

Its subcellular location is the cytoplasm. This Saccharomyces cerevisiae (strain YJM789) (Baker's yeast) protein is LAS seventeen-binding protein 3 (LSB3).